We begin with the raw amino-acid sequence, 384 residues long: Chaperone protein DnaJ (384 aa).

One can recognise a J domain in the interval 6 to 71 (DYYEVLGISK…TKRKTYDQFG (66 aa)). The CR-type zinc finger occupies 141–223 (GKKMSIKVNR…CHGTGNTRKV (83 aa)). Residues C154, C157, C171, C174, C197, C200, C211, and C214 each coordinate Zn(2+). 4 CXXCXGXG motif repeats span residues 154–161 (CEECNGTG), 171–178 (CSTCNGTG), 197–204 (CSACNGTG), and 211–218 (CSKCHGTG).

The protein belongs to the DnaJ family. Homodimer. The cofactor is Zn(2+).

It is found in the cytoplasm. Functionally, participates actively in the response to hyperosmotic and heat shock by preventing the aggregation of stress-denatured proteins and by disaggregating proteins, also in an autonomous, DnaK-independent fashion. Unfolded proteins bind initially to DnaJ; upon interaction with the DnaJ-bound protein, DnaK hydrolyzes its bound ATP, resulting in the formation of a stable complex. GrpE releases ADP from DnaK; ATP binding to DnaK triggers the release of the substrate protein, thus completing the reaction cycle. Several rounds of ATP-dependent interactions between DnaJ, DnaK and GrpE are required for fully efficient folding. Also involved, together with DnaK and GrpE, in the DNA replication of plasmids through activation of initiation proteins. The sequence is that of Chaperone protein DnaJ from Clostridioides difficile (strain 630) (Peptoclostridium difficile).